Reading from the N-terminus, the 193-residue chain is Probable GTP-binding protein EngB (193 aa).

The region spanning 19 to 188 (SVKEVCFMGR…HKQIFELFKA (170 aa)) is the EngB-type G domain. GTP is bound by residues 27 to 34 (GRSNVGKS), 53 to 57 (GRTQL), 70 to 73 (DLPG), 136 to 139 (NKFD), and 167 to 169 (VSA). Mg(2+) contacts are provided by Ser-34 and Thr-55.

Belongs to the TRAFAC class TrmE-Era-EngA-EngB-Septin-like GTPase superfamily. EngB GTPase family. It depends on Mg(2+) as a cofactor.

Necessary for normal cell division and for the maintenance of normal septation. This chain is Probable GTP-binding protein EngB, found in Mycoplasma pneumoniae (strain ATCC 29342 / M129 / Subtype 1) (Mycoplasmoides pneumoniae).